Reading from the N-terminus, the 20-residue chain is Maximin-Hu (20 aa).

The protein belongs to the bombinin family. Expressed by the skin glands.

Its subcellular location is the secreted. Functionally, has antimicrobial activity. This is Maximin-Hu from Bombina maxima (Giant fire-bellied toad).